A 109-amino-acid chain; its full sequence is MQEIERQIRMAVETGDVVLGSNQTIKLLKLGKPKLVIVAANCPAEIREDIEYYAELADVPVFVYPGTSMDLGDVCGRPHVVASMAVLDDGESDLIATVRKAMEEGAAPS.

The protein belongs to the eukaryotic ribosomal protein eL30 family.

In Methanopyrus kandleri (strain AV19 / DSM 6324 / JCM 9639 / NBRC 100938), this protein is Large ribosomal subunit protein eL30.